A 298-amino-acid chain; its full sequence is 5,10-methylenetetrahydrofolate reductase (298 aa).

Glutamate 28 (proton donor/acceptor) is an active-site residue. Residue threonine 59 coordinates NADH. Residues tyrosine 60, alanine 62, histidine 88, arginine 118, glycine 119, aspartate 120, alanine 132, tyrosine 152, histidine 156, alanine 159, aspartate 165, asparagine 168, and lysine 172 each contribute to the FAD site. Aspartate 120 provides a ligand contact to (6S)-5-methyl-5,6,7,8-tetrahydrofolate. Glutamine 183 is a binding site for NADH. Positions 183, 219, and 279 each coordinate (6S)-5-methyl-5,6,7,8-tetrahydrofolate.

It belongs to the methylenetetrahydrofolate reductase family. Requires FAD as cofactor.

It catalyses the reaction (6S)-5-methyl-5,6,7,8-tetrahydrofolate + NAD(+) = (6R)-5,10-methylene-5,6,7,8-tetrahydrofolate + NADH + H(+). It participates in one-carbon metabolism; tetrahydrofolate interconversion. It functions in the pathway amino-acid biosynthesis; L-methionine biosynthesis via de novo pathway. Its function is as follows. Catalyzes the NADH-dependent reduction of 5,10-methylenetetrahydrofolate to 5-methyltetrahydrofolate. Is required to provide the methyl group necessary for methionine synthetase to convert homocysteine to methionine; the methyl group is given by 5-methyltetrahydrofolate. The sequence is that of 5,10-methylenetetrahydrofolate reductase (metF) from Pectobacterium carotovorum subsp. carotovorum (Erwinia carotovora subsp. carotovora).